The sequence spans 21 residues: Testis ecdysiotropin peptide 1 (21 aa).

Residues 1–21 (ISDFDEYEPLNDADNNEVLDF) are disordered.

In terms of biological role, start or boost ecdysteroid synthesis in testis of larvae and pupae. This Lymantria dispar (Gypsy moth) protein is Testis ecdysiotropin peptide 1.